Here is a 494-residue protein sequence, read N- to C-terminus: GTPase Der (494 aa).

2 EngA-type G domains span residues proline 3–lysine 166 and isoleucine 208–threonine 381. GTP is bound by residues glycine 9–serine 16, aspartate 56–isoleucine 60, asparagine 118–aspartate 121, glycine 214–serine 221, aspartate 261–valine 265, and asparagine 326–aspartate 329. Positions arginine 382–glutamate 466 constitute a KH-like domain.

It belongs to the TRAFAC class TrmE-Era-EngA-EngB-Septin-like GTPase superfamily. EngA (Der) GTPase family. In terms of assembly, associates with the 50S ribosomal subunit.

Its function is as follows. GTPase that plays an essential role in the late steps of ribosome biogenesis. This Serratia proteamaculans (strain 568) protein is GTPase Der.